Here is a 94-residue protein sequence, read N- to C-terminus: Co-chaperonin GroES (94 aa).

The protein belongs to the GroES chaperonin family. As to quaternary structure, heptamer of 7 subunits arranged in a ring. Interacts with the chaperonin GroEL.

Its subcellular location is the cytoplasm. Together with the chaperonin GroEL, plays an essential role in assisting protein folding. The GroEL-GroES system forms a nano-cage that allows encapsulation of the non-native substrate proteins and provides a physical environment optimized to promote and accelerate protein folding. GroES binds to the apical surface of the GroEL ring, thereby capping the opening of the GroEL channel. The polypeptide is Co-chaperonin GroES (Bacillus cereus (strain ATCC 14579 / DSM 31 / CCUG 7414 / JCM 2152 / NBRC 15305 / NCIMB 9373 / NCTC 2599 / NRRL B-3711)).